Reading from the N-terminus, the 329-residue chain is Galactosylgalactosylxylosylprotein 3-beta-glucuronosyltransferase 2 (329 aa).

Residues 1–2 are Cytoplasmic-facing; that stretch reads MK. Residues 3 to 23 traverse the membrane as a helical; Signal-anchor for type II membrane protein segment; it reads SALFSRFFILLPWILIVIIML. Residues 24–329 are Lumenal-facing; the sequence is DVDTRRPAPP…YRLDTVKIEV (306 aa). The disordered stretch occupies residues 45–87; sequence VGRGGARLPPRRGGPDSGPGRGWEKRNESRPHARPRPEPPLPT. The segment covering 66 to 81 has biased composition (basic and acidic residues); the sequence is GWEKRNESRPHARPRP. Residue asparagine 71 is glycosylated (N-linked (GlcNAc...) asparagine). UDP-alpha-D-glucuronate-binding positions include 93–95, aspartate 124, arginine 161, arginine 166, and 191–193; these read PTY and DDD. A Mn(2+)-binding site is contributed by aspartate 193. The segment at 240 to 249 is interaction with galactose moiety of substrate glycoprotein; that stretch reads WRADRPFAID. The Proton donor/acceptor role is filled by glutamate 279. A glycan (N-linked (GlcNAc...) asparagine) is linked at asparagine 298. A UDP-alpha-D-glucuronate-binding site is contributed by 306–308; sequence HTR.

It belongs to the glycosyltransferase 43 family. Homodimer. Mn(2+) serves as cofactor.

It is found in the golgi apparatus membrane. It carries out the reaction 3-O-(beta-D-galactosyl-(1-&gt;3)-beta-D-galactosyl-(1-&gt;4)-beta-D-xylosyl)-L-seryl-[protein] + UDP-alpha-D-glucuronate = 3-O-(beta-D-GlcA-(1-&gt;3)-beta-D-Gal-(1-&gt;3)-beta-D-Gal-(1-&gt;4)-beta-D-Xyl)-L-seryl-[protein] + UDP + H(+). Its pathway is protein modification; protein glycosylation. Involved in the biosynthesis of L2/HNK-1 carbohydrate epitope on both glycolipids and glycoproteins. This Canis lupus familiaris (Dog) protein is Galactosylgalactosylxylosylprotein 3-beta-glucuronosyltransferase 2 (B3GAT2).